The sequence spans 414 residues: CinA-like protein (414 aa).

This sequence belongs to the CinA family.

This chain is CinA-like protein, found in Geobacter sp. (strain M21).